The sequence spans 732 residues: X-ray repair cross-complementing protein 5 (732 aa).

Residues 9–231 (AVVLCMDVGF…DEIYSFSESL (223 aa)) form the VWFA domain. Positions 138–165 (LSSRFSKSQLDIIIHSLKKCDISLQFFL) are leucine-zipper. K144 carries the post-translational modification N6-acetyllysine. Residue K195 forms a Glycyl lysine isopeptide (Lys-Gly) (interchain with G-Cter in SUMO2) linkage. The Ku domain maps to 253–452 (IGSNLSIRIA…KYAPTEAQLN (200 aa)). A phosphoserine mark is found at S255 and S258. An N6-acetyllysine modification is found at K265. S318 bears the Phosphoserine mark. At K332 the chain carries N6-acetyllysine. Residues K532 and K534 each participate in a glycyl lysine isopeptide (Lys-Gly) (interchain with G-Cter in SUMO2) cross-link. T535 carries the phosphothreonine modification. Glycyl lysine isopeptide (Lys-Gly) (interchain with G-Cter in SUMO2) cross-links involve residues K566 and K568. Residues S577, S579, and S580 each carry the phosphoserine; by PRKDC modification. Residues K660 and K665 each carry the N6-acetyllysine modification. Residues K669 and K688 each participate in a glycyl lysine isopeptide (Lys-Gly) (interchain with G-Cter in SUMO2) cross-link. T715 is modified (phosphothreonine; by PRKDC). An EEXXXDL motif motif is present at residues 720–728 (EEGGDVDDL).

Belongs to the ku80 family. As to quaternary structure, heterodimer composed of XRCC5/Ku80 and XRCC6/Ku70; heterodimerization stabilizes XRCC5 protein. Component of the core long-range non-homologous end joining (NHEJ) complex (also named DNA-PK complex) composed of PRKDC, LIG4, XRCC4, XRCC6/Ku70, XRCC5/Ku86 and NHEJ1/XLF. Additional component of the NHEJ complex includes PAXX. Following autophosphorylation, PRKDC dissociates from DNA, leading to formation of the short-range NHEJ complex, composed of LIG4, XRCC4, XRCC6/Ku70, XRCC5/Ku86 and NHEJ1/XLF. The XRCC5-XRCC6 dimer also associates with NAA15, and this complex displays DNA binding activity towards the osteocalcin FGF response element (OCFRE). In addition, XRCC5 binds to the osteoblast-specific transcription factors MSX2 and RUNX2. Interacts with ELF3. Interacts with APLF (via KBM motif). The XRCC5/XRCC6 dimer associates in a DNA-dependent manner with APEX1. Identified in a complex with DEAF1 and XRCC6. Interacts with NR4A3; the DNA-dependent protein kinase complex DNA-PK phosphorylates and activates NR4A3 and prevents NR4A3 ubiquitinylation and degradation. Interacts with RNF138. Interacts with CYREN isoform 1 (CYREN-1) and isoform 4 (CYREN-2) (via KBM motif). Interacts with WRN (via KBM motif). Interacts (via N-terminus) with HSF1 (via N-terminus); this interaction is direct and prevents XRCC5/XRCC6 heterodimeric binding and non-homologous end joining (NHEJ) repair activities induced by ionizing radiation (IR). Interacts with DHX9; this interaction occurs in a RNA-dependent manner. Part of the HDP-RNP complex composed of at least HEXIM1, PRKDC, XRCC5, XRCC6, paraspeckle proteins (SFPQ, NONO, PSPC1, RBM14, and MATR3) and NEAT1 RNA. Interacts with ERCC6. The XRCC5-XRCC6 dimer associates with ALKBH2. Interacts with TPRN; TPRN interacts with a number of DNA damage response proteins, is recruited to sites of DNA damage and may play a role in DNA damage repair. Interacts with ERCC6L2. In terms of assembly, (Microbial infection) Interacts with human T-cell leukemia virus 1/HTLV-1 protein HBZ. ADP-ribosylated by PARP3. Post-translationally, phosphorylated on serine residues. Phosphorylation by PRKDC may enhance helicase activity. In terms of processing, sumoylated. Ubiquitinated by RNF8 via 'Lys-48'-linked ubiquitination following DNA damage, leading to its degradation and removal from DNA damage sites. Ubiquitinated by RNF138, leading to remove the Ku complex from DNA breaks.

It localises to the nucleus. The protein localises to the nucleolus. Its subcellular location is the chromosome. Its function is as follows. Single-stranded DNA-dependent ATP-dependent helicase that plays a key role in DNA non-homologous end joining (NHEJ) by recruiting DNA-PK to DNA. Required for double-strand break repair and V(D)J recombination. Also has a role in chromosome translocation. The DNA helicase II complex binds preferentially to fork-like ends of double-stranded DNA in a cell cycle-dependent manner. It works in the 3'-5' direction. During NHEJ, the XRCC5-XRRC6 dimer performs the recognition step: it recognizes and binds to the broken ends of the DNA and protects them from further resection. Binding to DNA may be mediated by XRCC6. The XRCC5-XRRC6 dimer acts as a regulatory subunit of the DNA-dependent protein kinase complex DNA-PK by increasing the affinity of the catalytic subunit PRKDC to DNA by 100-fold. The XRCC5-XRRC6 dimer is probably involved in stabilizing broken DNA ends and bringing them together. The assembly of the DNA-PK complex to DNA ends is required for the NHEJ ligation step. The XRCC5-XRRC6 dimer probably also acts as a 5'-deoxyribose-5-phosphate lyase (5'-dRP lyase), by catalyzing the beta-elimination of the 5' deoxyribose-5-phosphate at an abasic site near double-strand breaks. XRCC5 probably acts as the catalytic subunit of 5'-dRP activity, and allows to 'clean' the termini of abasic sites, a class of nucleotide damage commonly associated with strand breaks, before such broken ends can be joined. The XRCC5-XRRC6 dimer together with APEX1 acts as a negative regulator of transcription. In association with NAA15, the XRCC5-XRRC6 dimer binds to the osteocalcin promoter and activates osteocalcin expression. As part of the DNA-PK complex, involved in the early steps of ribosome assembly by promoting the processing of precursor rRNA into mature 18S rRNA in the small-subunit processome. Binding to U3 small nucleolar RNA, recruits PRKDC and XRCC5/Ku86 to the small-subunit processome. Plays a role in the regulation of DNA virus-mediated innate immune response by assembling into the HDP-RNP complex, a complex that serves as a platform for IRF3 phosphorylation and subsequent innate immune response activation through the cGAS-STING pathway. This Homo sapiens (Human) protein is X-ray repair cross-complementing protein 5 (XRCC5).